The sequence spans 309 residues: Putative F-box protein At4g05475 (309 aa).

Residues 1-26 (MATSTTLQSLLMKEDEEQRNKRRTTS) are disordered. The F-box domain occupies 37-84 (RINWVDLPPELTTSILLRLSVTDILDNARKLCRAWRRICKDPSMWRKI).

This Arabidopsis thaliana (Mouse-ear cress) protein is Putative F-box protein At4g05475.